We begin with the raw amino-acid sequence, 940 residues long: Valine--tRNA ligase (940 aa).

The 'HIGH' region signature appears at 47 to 57; that stretch reads PNVTGILHMGH. The 'KMSKS' region motif lies at 564–568; that stretch reads KLSKS. K567 contributes to the ATP binding site. Residues 872–938 adopt a coiled-coil conformation; that stretch reads PIEQITKEKN…LQSILDKLAS (67 aa).

Belongs to the class-I aminoacyl-tRNA synthetase family. ValS type 1 subfamily. In terms of assembly, monomer.

It localises to the cytoplasm. It carries out the reaction tRNA(Val) + L-valine + ATP = L-valyl-tRNA(Val) + AMP + diphosphate. In terms of biological role, catalyzes the attachment of valine to tRNA(Val). As ValRS can inadvertently accommodate and process structurally similar amino acids such as threonine, to avoid such errors, it has a 'posttransfer' editing activity that hydrolyzes mischarged Thr-tRNA(Val) in a tRNA-dependent manner. This Chlamydia felis (strain Fe/C-56) (Chlamydophila felis) protein is Valine--tRNA ligase.